Reading from the N-terminus, the 215-residue chain is Protein Thf1 (215 aa).

Positions 182 to 213 (ERMDQAVELVEETIAAEKRKKERRLEEQAQRT) form a coiled coil.

Belongs to the THF1 family.

Its function is as follows. May be involved in photosynthetic membrane biogenesis. This Synechococcus sp. (strain CC9605) protein is Protein Thf1.